We begin with the raw amino-acid sequence, 304 residues long: Protease HtpX homolog (304 aa).

2 helical membrane-spanning segments follow: residues I14–I34 and Y39–M59. A Zn(2+)-binding site is contributed by H144. The active site involves E145. Zn(2+) is bound at residue H148. A run of 2 helical transmembrane segments spans residues I159–F179 and A202–I222. A Zn(2+)-binding site is contributed by E231.

This sequence belongs to the peptidase M48B family. It depends on Zn(2+) as a cofactor.

The protein resides in the cell membrane. In Listeria monocytogenes serotype 4b (strain CLIP80459), this protein is Protease HtpX homolog.